We begin with the raw amino-acid sequence, 533 residues long: Receptor homology region, transmembrane domain- and RING domain-containing protein 1 (533 aa).

Positions 1 to 26 (MNRRRTMLLLICLCATFCLMTQLGAA) are cleaved as a signal peptide. The Lumenal portion of the chain corresponds to 27–167 (NVVLMGTNLT…LPAFENSAWS (141 aa)). Asn34 carries N-linked (GlcNAc...) asparagine glycosylation. The cysteines at positions 68 and 91 are disulfide-linked. A PA domain is found at 84–145 (ALIIRGGCTF…ISKASGEVLK (62 aa)). The chain crosses the membrane as a helical span at residues 168–188 (IMAISFISLLAMSAVLATCFF). At 189–533 (VRRHHIRRDR…MASAQSLPGC (345 aa)) the chain is on the cytoplasmic side. The segment at 236–278 (CAICLEDYNVGEKLRVLPCRHKFHAACVDLWLTTWRTFCPVCK) adopts an RING-type; atypical zinc-finger fold. Disordered regions lie at residues 309–329 (SFRS…PSSQ) and 440–476 (LRRC…LAGA). The segment covering 448 to 463 (PSLSTMAPQSPQQSQL) has biased composition (polar residues).

The protein localises to the prevacuolar compartment membrane. The protein resides in the protein storage vacuole membrane. It is found in the golgi apparatus membrane. In terms of biological role, involved in the trafficking of vacuolar proteins. Functions probably as a sorting receptor for protein trafficking to the protein storage vacuole (PSV) by binding the C-terminal vacuolar sorting determinant (VSD) of vacuolar-sorted proteins. The protein is Receptor homology region, transmembrane domain- and RING domain-containing protein 1 of Oryza sativa subsp. japonica (Rice).